The sequence spans 60 residues: Metallothionein (60 aa).

The tract at residues 1–28 (MDPCDCSKTGKCNCGGSCTCTNCSCTSC) is beta. Residues Cys4, Cys6, Cys12, Cys14, Cys18, Cys20, Cys23, Cys25, Cys28, Cys32, Cys33, Cys35, Cys36, Cys40, Cys43, Cys47, Cys49, Cys54, Cys58, and Cys59 each contribute to the a divalent metal cation site. The tract at residues 29–60 (KKSCCACCPSGCTKCASGCVCKGKTCDTTCCQ) is alpha.

This sequence belongs to the metallothionein superfamily. Type 1 family.

Its function is as follows. Metallothioneins have a high content of cysteine residues that bind various heavy metals. The chain is Metallothionein (mt) from Oryzias latipes (Japanese rice fish).